The primary structure comprises 372 residues: Probable leucine aminopeptidase MCYG_08380 (372 aa).

Residues 1–19 (MKVSVLAAVAAFAAATAIA) form the signal peptide. An N-linked (GlcNAc...) asparagine glycan is attached at Asn96. 2 residues coordinate Zn(2+): His175 and Asp194. Residues Asn195 and Asn219 are each glycosylated (N-linked (GlcNAc...) asparagine). Positions 233 and 260 each coordinate Zn(2+). A disulfide bridge connects residues Cys305 and Cys309. Residue His338 participates in Zn(2+) binding.

Belongs to the peptidase M28 family. M28E subfamily. In terms of assembly, monomer. Zn(2+) serves as cofactor.

The protein localises to the secreted. In terms of biological role, probable extracellular aminopeptidase which contributes to pathogenicity. In Arthroderma otae (strain ATCC MYA-4605 / CBS 113480) (Microsporum canis), this protein is Probable leucine aminopeptidase MCYG_08380.